We begin with the raw amino-acid sequence, 1355 residues long: DNA-directed RNA polymerase subunit beta' (1355 aa).

4 residues coordinate Zn(2+): Cys219, Cys293, Cys300, and Cys303. Positions 1331–1355 (AEVEVDDEVDDDYEDDDEDDDDYED) are disordered.

Belongs to the RNA polymerase beta' chain family. RpoC2 subfamily. As to quaternary structure, in cyanobacteria the RNAP catalytic core is composed of 2 alpha, 1 beta, 1 beta', 1 gamma and 1 omega subunit. When a sigma factor is associated with the core the holoenzyme is formed, which can initiate transcription. It depends on Zn(2+) as a cofactor.

It catalyses the reaction RNA(n) + a ribonucleoside 5'-triphosphate = RNA(n+1) + diphosphate. Functionally, DNA-dependent RNA polymerase catalyzes the transcription of DNA into RNA using the four ribonucleoside triphosphates as substrates. This Nostoc sp. (strain PCC 7120 / SAG 25.82 / UTEX 2576) protein is DNA-directed RNA polymerase subunit beta'.